The sequence spans 179 residues: MSRIGKMPIPLSNQAKIEIKDSNIRVSGPKGTLEQRLTDQVTVSEENGLVTVLRIDDSKKAKAQHGLYRMLISNMVDGVTKGFTRKLEIAGVGYRAELKNDLLALTLGYSHMIYFKAPDEIKIEVPDQVTVLVSGIDKALVGQVAAKIRSFRKPEPYRGKGIKYEGEVIRRKEGKAAGK.

It belongs to the universal ribosomal protein uL6 family. In terms of assembly, part of the 50S ribosomal subunit.

Functionally, this protein binds to the 23S rRNA, and is important in its secondary structure. It is located near the subunit interface in the base of the L7/L12 stalk, and near the tRNA binding site of the peptidyltransferase center. The protein is Large ribosomal subunit protein uL6 of Pelodictyon phaeoclathratiforme (strain DSM 5477 / BU-1).